Reading from the N-terminus, the 215-residue chain is 3-isopropylmalate dehydratase small subunit (215 aa).

The protein belongs to the LeuD family. LeuD type 1 subfamily. Heterodimer of LeuC and LeuD.

It carries out the reaction (2R,3S)-3-isopropylmalate = (2S)-2-isopropylmalate. Its pathway is amino-acid biosynthesis; L-leucine biosynthesis; L-leucine from 3-methyl-2-oxobutanoate: step 2/4. Its function is as follows. Catalyzes the isomerization between 2-isopropylmalate and 3-isopropylmalate, via the formation of 2-isopropylmaleate. The protein is 3-isopropylmalate dehydratase small subunit of Xanthomonas euvesicatoria pv. vesicatoria (strain 85-10) (Xanthomonas campestris pv. vesicatoria).